The sequence spans 558 residues: Polypeptide N-acetylgalactosaminyltransferase 16 (558 aa).

Residues 1–6 lie on the Cytoplasmic side of the membrane; sequence MRKIRA. Residues 7–26 form a helical; Signal-anchor for type II membrane protein membrane-spanning segment; it reads NAIAILTVAWILGTFYYLWQ. Residues 27 to 558 lie on the Lumenal side of the membrane; sequence DNRAHAASSS…AQQWQLLPHT (532 aa). Low complexity predominate over residues 34 to 46; that stretch reads SSSGRGAQRAGGR. A disordered region spans residues 34 to 53; the sequence is SSSGRGAQRAGGRPEQLRED. 5 cysteine pairs are disulfide-bonded: cysteine 113/cysteine 340, cysteine 331/cysteine 409, cysteine 441/cysteine 460, cysteine 486/cysteine 506, and cysteine 530/cysteine 543. Positions 122–227 are catalytic subdomain A; that stretch reads LPATSVIITF…VEWLQPMLQR (106 aa). 2 residues coordinate substrate: aspartate 163 and arginine 188. Aspartate 211 is a binding site for Mn(2+). Serine 212 contacts substrate. Histidine 213 contacts Mn(2+). The catalytic subdomain B stretch occupies residues 286–348; that stretch reads PIRTPVIAGG…PCSRVGHVFR (63 aa). Tryptophan 317 contacts substrate. Residue histidine 345 coordinates Mn(2+). Residues arginine 348, histidine 351, and tyrosine 353 each contribute to the substrate site. In terms of domain architecture, Ricin B-type lectin spans 428 to 555; the sequence is KEVLPGVIKQ…DAQAQQWQLL (128 aa).

Belongs to the glycosyltransferase 2 family. GalNAc-T subfamily. Mn(2+) is required as a cofactor. In the CNS, it is predominantly expressed in several distinct hypothalamic, thalamic and amygdaloid nuclei. The most abundant level of expression is in the paraventricular, ventromedial and arcuate nuclei of the hypothalamus, the anterodorsal and parafascicular nuclei of the thalamus and the central, basomedial and medial nuclei of the amygdala. Also expressed in cerebral cortex, lateral septum, habenula and hippocampus.

It is found in the golgi apparatus membrane. It catalyses the reaction L-seryl-[protein] + UDP-N-acetyl-alpha-D-galactosamine = a 3-O-[N-acetyl-alpha-D-galactosaminyl]-L-seryl-[protein] + UDP + H(+). The enzyme catalyses L-threonyl-[protein] + UDP-N-acetyl-alpha-D-galactosamine = a 3-O-[N-acetyl-alpha-D-galactosaminyl]-L-threonyl-[protein] + UDP + H(+). Its pathway is protein modification; protein glycosylation. Catalyzes the initial reaction in O-linked oligosaccharide biosynthesis, the transfer of an N-acetyl-D-galactosamine residue to a serine or threonine residue on the protein receptor. The chain is Polypeptide N-acetylgalactosaminyltransferase 16 (Galnt16) from Mus musculus (Mouse).